Consider the following 495-residue polypeptide: MIPVVALVGRPNVGKSTLFNRLTRTRDALVADFPGLTRDRKYGRAEVEGHEFIIIDTGGIDGTEDGVETRMAGQSLVAIEEADIVLFMVDARAGLMPADEGIAKHLRSREKMTVLVANKTDGLDPDMVTADFYSLGMGEVYAIAASHGRGVTSLLETVLLPFVQDEIEEPVELTEEEENAAYWAALEAEEQASEEEAEDDFNPEDLPIKLAIVGRPNVGKSTLTNRILGEERVVVYDMPGTTRDSIYIPMVRDEREYILIDTAGVRKRGKVTETVEKFSVIKTLQAIEDANVVLLVIDAREGISDQDLSLLGFILNSGRSLVIVMNKWDGLSQEVRDQVKDTLDLRLGFIDFARIHFISALHGSGVGNLFESVTEAYSCATRRVSTAMLTRIMQMASDDHQPPLVRGRRVKLKYAHAGGYNPPIVVIHGNQVKDLPDSYKRYLMNYYRRSLEVMGTPIRIQFKEGENPFAEKRNKLTPTQLRKRKRLMSHLKKSK.

EngA-type G domains follow at residues 3 to 166 (PVVA…VQDE) and 208 to 381 (IKLA…SCAT). GTP contacts are provided by residues 9–16 (GRPNVGKS), 56–60 (DTGGI), 118–121 (NKTD), 214–221 (GRPNVGKS), 261–265 (DTAGV), and 326–329 (NKWD). The 85-residue stretch at 382–466 (RRVSTAMLTR…PIRIQFKEGE (85 aa)) folds into the KH-like domain.

It belongs to the TRAFAC class TrmE-Era-EngA-EngB-Septin-like GTPase superfamily. EngA (Der) GTPase family. Associates with the 50S ribosomal subunit.

Its function is as follows. GTPase that plays an essential role in the late steps of ribosome biogenesis. In Pectobacterium atrosepticum (strain SCRI 1043 / ATCC BAA-672) (Erwinia carotovora subsp. atroseptica), this protein is GTPase Der.